Here is a 221-residue protein sequence, read N- to C-terminus: Cytidylate kinase (221 aa).

ATP is bound at residue 11–19 (GPTASGKGT).

It belongs to the cytidylate kinase family. Type 1 subfamily.

The protein resides in the cytoplasm. It carries out the reaction CMP + ATP = CDP + ADP. The enzyme catalyses dCMP + ATP = dCDP + ADP. The chain is Cytidylate kinase from Cupriavidus pinatubonensis (strain JMP 134 / LMG 1197) (Cupriavidus necator (strain JMP 134)).